The chain runs to 351 residues: Phosphoribosylformylglycinamidine cyclo-ligase (351 aa).

Belongs to the AIR synthase family.

It is found in the cytoplasm. The enzyme catalyses 2-formamido-N(1)-(5-O-phospho-beta-D-ribosyl)acetamidine + ATP = 5-amino-1-(5-phospho-beta-D-ribosyl)imidazole + ADP + phosphate + H(+). It functions in the pathway purine metabolism; IMP biosynthesis via de novo pathway; 5-amino-1-(5-phospho-D-ribosyl)imidazole from N(2)-formyl-N(1)-(5-phospho-D-ribosyl)glycinamide: step 2/2. In Burkholderia lata (strain ATCC 17760 / DSM 23089 / LMG 22485 / NCIMB 9086 / R18194 / 383), this protein is Phosphoribosylformylglycinamidine cyclo-ligase.